The sequence spans 248 residues: Granulin (248 aa).

Belongs to the polyhedrin family.

Component of the virus occlusion bodies, which are large proteinaceous structures, that protect the virus from the outside environment for extended periods until they are ingested by insect larvae. In Zygaenidae (burnets), this protein is Granulin.